We begin with the raw amino-acid sequence, 122 residues long: Small ribosomal subunit protein uS13 (122 aa).

The segment at 96–122 (LPVHGQRTKTNARTRKGPARTVAGKKK) is disordered.

The protein belongs to the universal ribosomal protein uS13 family. In terms of assembly, part of the 30S ribosomal subunit. Forms a loose heterodimer with protein S19. Forms two bridges to the 50S subunit in the 70S ribosome.

Functionally, located at the top of the head of the 30S subunit, it contacts several helices of the 16S rRNA. In the 70S ribosome it contacts the 23S rRNA (bridge B1a) and protein L5 of the 50S subunit (bridge B1b), connecting the 2 subunits; these bridges are implicated in subunit movement. Contacts the tRNAs in the A and P-sites. This chain is Small ribosomal subunit protein uS13, found in Geotalea daltonii (strain DSM 22248 / JCM 15807 / FRC-32) (Geobacter daltonii).